A 163-amino-acid polypeptide reads, in one-letter code: ATP synthase subunit b (163 aa).

Residues glycine 9–leucine 29 traverse the membrane as a helical segment.

The protein belongs to the ATPase B chain family. F-type ATPases have 2 components, F(1) - the catalytic core - and F(0) - the membrane proton channel. F(1) has five subunits: alpha(3), beta(3), gamma(1), delta(1), epsilon(1). F(0) has four main subunits: a(1), b(2) and c(10-14). The alpha and beta chains form an alternating ring which encloses part of the gamma chain. F(1) is attached to F(0) by a central stalk formed by the gamma and epsilon chains, while a peripheral stalk is formed by the delta and b chains.

It is found in the cell membrane. Its function is as follows. F(1)F(0) ATP synthase produces ATP from ADP in the presence of a proton or sodium gradient. F-type ATPases consist of two structural domains, F(1) containing the extramembraneous catalytic core and F(0) containing the membrane proton channel, linked together by a central stalk and a peripheral stalk. During catalysis, ATP synthesis in the catalytic domain of F(1) is coupled via a rotary mechanism of the central stalk subunits to proton translocation. Component of the F(0) channel, it forms part of the peripheral stalk, linking F(1) to F(0). The protein is ATP synthase subunit b of Roseiflexus castenholzii (strain DSM 13941 / HLO8).